Consider the following 449-residue polypeptide: UDP-N-acetylmuramoyl-tripeptide--D-alanyl-D-alanine ligase (449 aa).

106–112 (GSVGKTS) contacts ATP.

The protein belongs to the MurCDEF family. MurF subfamily.

It localises to the cytoplasm. The catalysed reaction is D-alanyl-D-alanine + UDP-N-acetyl-alpha-D-muramoyl-L-alanyl-gamma-D-glutamyl-meso-2,6-diaminopimelate + ATP = UDP-N-acetyl-alpha-D-muramoyl-L-alanyl-gamma-D-glutamyl-meso-2,6-diaminopimeloyl-D-alanyl-D-alanine + ADP + phosphate + H(+). Its pathway is cell wall biogenesis; peptidoglycan biosynthesis. Its function is as follows. Involved in cell wall formation. Catalyzes the final step in the synthesis of UDP-N-acetylmuramoyl-pentapeptide, the precursor of murein. This Rickettsia prowazekii (strain Madrid E) protein is UDP-N-acetylmuramoyl-tripeptide--D-alanyl-D-alanine ligase.